A 92-amino-acid polypeptide reads, in one-letter code: Neuropeptide ShK-like2 (92 aa).

An N-terminal signal peptide occupies residues 1–23; the sequence is MTTIRCVLFAVLLFAYCALLIKA. The propeptide occupies 24–51; sequence RSIDAEAEKTWQEEETKTVAEKSPLKKR. Intrachain disulfides connect cysteine 53–cysteine 92, cysteine 61–cysteine 85, and cysteine 70–cysteine 89.

In terms of tissue distribution, transcripts are first expressed mostly in the endoderm (with rare ectodermal cells) in the late planulae. They are mostly expressed in endodermal ganglion cells in the body column and tentacles in primary polyps, as well as in a small number of ectodermal sensory neurons in tentacles and body wall. They are not expressed in nematocytes. As to expression, transcripts are predominantly expressed in ectodermal sensory neurons in early and late planulae. They are expressed in endodermal ganglion cells in the body column and tentacles in primary polyps, as well as in a small number of ectodermal neurons in pharynx. They are not expressed in nematocytes.

In vivo, this neuropeptide induces contraction paralysis followed by death (within 2 hours) on 4 zebrafish larvae on the 15 tested. Also induces body contraction in Nematostella 11-dpf polyps. The protein is Neuropeptide ShK-like2 of Nematostella vectensis (Starlet sea anemone).